A 317-amino-acid polypeptide reads, in one-letter code: HTH-type transcriptional repressor PA14_22550 (317 aa).

The 59-residue stretch at 1-59 (MDKLTAMATFVKVVDAGSFTRAADALGLPKARVSQRVSDLEKHLGVRLLNRTTRALSLT) folds into the HTH lysR-type domain. The H-T-H motif DNA-binding region spans 19-38 (FTRAADALGLPKARVSQRVS).

Belongs to the LysR transcriptional regulatory family.

In terms of biological role, represses the transcription of the operon that consists of PA14_22510 to PA14_22540. The sequence is that of HTH-type transcriptional repressor PA14_22550 from Pseudomonas aeruginosa (strain UCBPP-PA14).